A 144-amino-acid chain; its full sequence is Large ribosomal subunit protein uL16 (144 aa).

It belongs to the universal ribosomal protein uL16 family. In terms of assembly, part of the 50S ribosomal subunit.

Binds 23S rRNA and is also seen to make contacts with the A and possibly P site tRNAs. The protein is Large ribosomal subunit protein uL16 of Oceanobacillus iheyensis (strain DSM 14371 / CIP 107618 / JCM 11309 / KCTC 3954 / HTE831).